The chain runs to 157 residues: Lipoprotein signal peptidase (157 aa).

Helical transmembrane passes span 10–30 (LVFM…KYAI), 58–78 (FLEG…FIFL), and 84–104 (LFKN…SNVL). Active-site residues include aspartate 114 and aspartate 131. The chain crosses the membrane as a helical span at residues 122-142 (FDFAIFNFADVMIDVGVGVLL).

This sequence belongs to the peptidase A8 family.

The protein localises to the cell inner membrane. The catalysed reaction is Release of signal peptides from bacterial membrane prolipoproteins. Hydrolyzes -Xaa-Yaa-Zaa-|-(S,diacylglyceryl)Cys-, in which Xaa is hydrophobic (preferably Leu), and Yaa (Ala or Ser) and Zaa (Gly or Ala) have small, neutral side chains.. The protein operates within protein modification; lipoprotein biosynthesis (signal peptide cleavage). In terms of biological role, this protein specifically catalyzes the removal of signal peptides from prolipoproteins. The sequence is that of Lipoprotein signal peptidase from Helicobacter pylori (strain ATCC 700392 / 26695) (Campylobacter pylori).